The following is a 271-amino-acid chain: 4-hydroxy-tetrahydrodipicolinate reductase (271 aa).

NAD(+)-binding positions include 10-15, Glu-36, 100-102, and 124-127; these read GAGGRM, GTT, and SGNM. His-157 acts as the Proton donor/acceptor in catalysis. Residue His-158 coordinates (S)-2,3,4,5-tetrahydrodipicolinate. The active-site Proton donor is the Lys-161. Position 167–168 (167–168) interacts with (S)-2,3,4,5-tetrahydrodipicolinate; sequence GT.

It belongs to the DapB family.

It localises to the cytoplasm. It catalyses the reaction (S)-2,3,4,5-tetrahydrodipicolinate + NAD(+) + H2O = (2S,4S)-4-hydroxy-2,3,4,5-tetrahydrodipicolinate + NADH + H(+). The catalysed reaction is (S)-2,3,4,5-tetrahydrodipicolinate + NADP(+) + H2O = (2S,4S)-4-hydroxy-2,3,4,5-tetrahydrodipicolinate + NADPH + H(+). Its pathway is amino-acid biosynthesis; L-lysine biosynthesis via DAP pathway; (S)-tetrahydrodipicolinate from L-aspartate: step 4/4. In terms of biological role, catalyzes the conversion of 4-hydroxy-tetrahydrodipicolinate (HTPA) to tetrahydrodipicolinate. The polypeptide is 4-hydroxy-tetrahydrodipicolinate reductase (Rhodopseudomonas palustris (strain ATCC BAA-98 / CGA009)).